We begin with the raw amino-acid sequence, 101 residues long: MDKSKQPFRKSKRSFRRRLPPIGSGDRIDYRNMSLIGRFISEQGKILSRRVNRLTLKQQRLITIAIKQARILSPLPFLNNEKQFERTESLPRITGTRTIKK.

Residues Met1–Leu19 show a composition bias toward basic residues. A disordered region spans residues Met1–Ser24.

It belongs to the bacterial ribosomal protein bS18 family. As to quaternary structure, part of the 30S ribosomal subunit.

The protein localises to the plastid. Its subcellular location is the chloroplast. The protein is Small ribosomal subunit protein bS18c of Amborella trichopoda.